Consider the following 827-residue polypeptide: Glycerol-3-phosphate acyltransferase (827 aa).

Positions 325–330 match the HXXXXD motif motif; it reads CHRSHM.

Belongs to the GPAT/DAPAT family.

The protein localises to the cell inner membrane. It catalyses the reaction sn-glycerol 3-phosphate + an acyl-CoA = a 1-acyl-sn-glycero-3-phosphate + CoA. The protein operates within phospholipid metabolism; CDP-diacylglycerol biosynthesis; CDP-diacylglycerol from sn-glycerol 3-phosphate: step 1/3. This is Glycerol-3-phosphate acyltransferase from Shigella flexneri serotype 5b (strain 8401).